A 358-amino-acid chain; its full sequence is MLYNLLYPLSSDITVFNVFRYITFRSAWALATALLVSIVVGPRFIAWLQRLKCRQFIHEDVTCHMSKAGTPTMGGLLIGFAVTFSVLLWADLRNPYIWLTLLVFTGFGFIGFLDDYTKLRRRNNKGLTASAKFLWQVGVAVAAMYLLVQLPAYSTKLAFPFFKGLTPDLGWLYIPFAVAVMVGSSNGVNLTDGLDGLAIGPTIVAGIVFSIFIYVAGHSQIAGYLQVPYVPGVGEVAVFCGALVGAGLGFLWFNAYPAQVFMGDVGSLSLGGTLGFLAVLCKQELLLLVVGGLFVVETLSVILQVGYFKFSGGKRIFRMAPLHHHFELQGIPESKIIIRFWITSALLGLIALSVLKLR.

A run of 10 helical transmembrane segments spans residues 28 to 48 (WALA…IAWL), 72 to 92 (TMGG…WADL), 96 to 116 (YIWL…LDDY), 133 to 153 (FLWQ…LPAY), 164 to 184 (GLTP…MVGS), 196 to 216 (GLAI…IYVA), 233 to 253 (VGEV…FLWF), 260 to 280 (VFMG…LAVL), 285 to 305 (LLLL…ILQV), and 335 to 355 (KIII…LSVL).

This sequence belongs to the glycosyltransferase 4 family. MraY subfamily. Mg(2+) serves as cofactor.

Its subcellular location is the cell inner membrane. It catalyses the reaction UDP-N-acetyl-alpha-D-muramoyl-L-alanyl-gamma-D-glutamyl-meso-2,6-diaminopimeloyl-D-alanyl-D-alanine + di-trans,octa-cis-undecaprenyl phosphate = di-trans,octa-cis-undecaprenyl diphospho-N-acetyl-alpha-D-muramoyl-L-alanyl-D-glutamyl-meso-2,6-diaminopimeloyl-D-alanyl-D-alanine + UMP. Its pathway is cell wall biogenesis; peptidoglycan biosynthesis. Its function is as follows. Catalyzes the initial step of the lipid cycle reactions in the biosynthesis of the cell wall peptidoglycan: transfers peptidoglycan precursor phospho-MurNAc-pentapeptide from UDP-MurNAc-pentapeptide onto the lipid carrier undecaprenyl phosphate, yielding undecaprenyl-pyrophosphoryl-MurNAc-pentapeptide, known as lipid I. The sequence is that of Phospho-N-acetylmuramoyl-pentapeptide-transferase from Nitratidesulfovibrio vulgaris (strain ATCC 29579 / DSM 644 / CCUG 34227 / NCIMB 8303 / VKM B-1760 / Hildenborough) (Desulfovibrio vulgaris).